The chain runs to 201 residues: LexA repressor (201 aa).

Positions 28–48 (MRDIAAHLRISGTLGVSKHLT) form a DNA-binding region, H-T-H motif. Active-site for autocatalytic cleavage activity residues include Ser120 and Lys157.

This sequence belongs to the peptidase S24 family. In terms of assembly, homodimer.

The enzyme catalyses Hydrolysis of Ala-|-Gly bond in repressor LexA.. Functionally, represses a number of genes involved in the response to DNA damage (SOS response), including recA and lexA. In the presence of single-stranded DNA, RecA interacts with LexA causing an autocatalytic cleavage which disrupts the DNA-binding part of LexA, leading to derepression of the SOS regulon and eventually DNA repair. This is LexA repressor from Geobacter metallireducens (strain ATCC 53774 / DSM 7210 / GS-15).